The following is a 374-amino-acid chain: Peptide chain release factor 2 (374 aa).

N5-methylglutamine is present on Q252.

It belongs to the prokaryotic/mitochondrial release factor family. Post-translationally, methylated by PrmC. Methylation increases the termination efficiency of RF2.

Its subcellular location is the cytoplasm. Functionally, peptide chain release factor 2 directs the termination of translation in response to the peptide chain termination codons UGA and UAA. The chain is Peptide chain release factor 2 from Stenotrophomonas maltophilia (strain R551-3).